The primary structure comprises 156 residues: Small ribosomal subunit protein uS7 (156 aa).

This sequence belongs to the universal ribosomal protein uS7 family. In terms of assembly, part of the 30S ribosomal subunit. Contacts proteins S9 and S11.

Functionally, one of the primary rRNA binding proteins, it binds directly to 16S rRNA where it nucleates assembly of the head domain of the 30S subunit. Is located at the subunit interface close to the decoding center, probably blocks exit of the E-site tRNA. The sequence is that of Small ribosomal subunit protein uS7 from Clostridium botulinum (strain Alaska E43 / Type E3).